A 290-amino-acid polypeptide reads, in one-letter code: Glycine--tRNA ligase alpha subunit (290 aa).

This sequence belongs to the class-II aminoacyl-tRNA synthetase family. As to quaternary structure, tetramer of two alpha and two beta subunits.

It localises to the cytoplasm. The enzyme catalyses tRNA(Gly) + glycine + ATP = glycyl-tRNA(Gly) + AMP + diphosphate. This chain is Glycine--tRNA ligase alpha subunit, found in Zymomonas mobilis subsp. mobilis (strain ATCC 31821 / ZM4 / CP4).